Here is a 285-residue protein sequence, read N- to C-terminus: Bifunctional protein FolD (285 aa).

NADP(+) contacts are provided by residues 166 to 168 (GAS) and Ile232.

The protein belongs to the tetrahydrofolate dehydrogenase/cyclohydrolase family. As to quaternary structure, homodimer.

It carries out the reaction (6R)-5,10-methylene-5,6,7,8-tetrahydrofolate + NADP(+) = (6R)-5,10-methenyltetrahydrofolate + NADPH. The catalysed reaction is (6R)-5,10-methenyltetrahydrofolate + H2O = (6R)-10-formyltetrahydrofolate + H(+). It functions in the pathway one-carbon metabolism; tetrahydrofolate interconversion. Functionally, catalyzes the oxidation of 5,10-methylenetetrahydrofolate to 5,10-methenyltetrahydrofolate and then the hydrolysis of 5,10-methenyltetrahydrofolate to 10-formyltetrahydrofolate. This chain is Bifunctional protein FolD, found in Photobacterium profundum (strain SS9).